Consider the following 475-residue polypeptide: L-ornithine N(5)-monooxygenase (475 aa).

FAD is bound by residues 65–73 and Gln84; that span reads ERQPEFGWH. Lys89 contacts substrate. Residue Val150 coordinates FAD. 238–241 is an NADP(+) binding site; it reads GGQS. Substrate contacts are provided by residues 277 to 280 and Asn307; that span reads NEIF. Residue 307–309 participates in NADP(+) binding; it reads NYG. Residue 446–448 participates in FAD binding; the sequence is SLL. Ser449 is a binding site for substrate.

Belongs to the lysine N(6)-hydroxylase/L-ornithine N(5)-oxygenase family. In terms of assembly, homotetramer. FAD is required as a cofactor.

It carries out the reaction L-ornithine + NADPH + O2 = N(5)-hydroxy-L-ornithine + NADP(+) + H2O. The catalysed reaction is L-ornithine + NADH + O2 = N(5)-hydroxy-L-ornithine + NAD(+) + H2O. It functions in the pathway siderophore biosynthesis. Its function is as follows. L-ornithine N(5)-monooxygenase; part of the gene cluster that mediates the biosynthesis of hydroxamate-containing siderophores that play a critical role in virulence via intracellular iron acquisition during macrophage infection. SID1 catalyzes the conversion of L-ornithine to N(5)-hydroxyornithine, the first step in the biosynthesis of all hydroxamate-containing siderophores. The chain is L-ornithine N(5)-monooxygenase from Ajellomyces capsulatus (Darling's disease fungus).